We begin with the raw amino-acid sequence, 537 residues long: Chaperonin GroEL (537 aa).

Residues 29–32 (TLGP), 86–90 (DGTTT), Gly413, and Asp492 contribute to the ATP site.

The protein belongs to the chaperonin (HSP60) family. As to quaternary structure, forms a cylinder of 14 subunits composed of two heptameric rings stacked back-to-back. Interacts with the co-chaperonin GroES.

It is found in the cytoplasm. It catalyses the reaction ATP + H2O + a folded polypeptide = ADP + phosphate + an unfolded polypeptide.. Its function is as follows. Together with its co-chaperonin GroES, plays an essential role in assisting protein folding. The GroEL-GroES system forms a nano-cage that allows encapsulation of the non-native substrate proteins and provides a physical environment optimized to promote and accelerate protein folding. The protein is Chaperonin GroEL of Dehalococcoides mccartyi (strain ATCC BAA-2100 / JCM 16839 / KCTC 5957 / BAV1).